Reading from the N-terminus, the 165-residue chain is Large ribosomal subunit protein uL5 (165 aa).

The protein belongs to the universal ribosomal protein uL5 family. Part of the 50S ribosomal subunit; contacts the 5S rRNA and probably tRNA. Forms a bridge to the 30S subunit in the 70S ribosome.

In terms of biological role, this is one of the proteins that bind and probably mediate the attachment of the 5S RNA into the large ribosomal subunit, where it forms part of the central protuberance. In the 70S ribosome it contacts protein S13 of the 30S subunit (bridge B1b), connecting the 2 subunits; this bridge is implicated in subunit movement. May contact the P site tRNA; the 5S rRNA and some of its associated proteins might help stabilize positioning of ribosome-bound tRNAs. This is Large ribosomal subunit protein uL5 from Methanosarcina acetivorans (strain ATCC 35395 / DSM 2834 / JCM 12185 / C2A).